Reading from the N-terminus, the 68-residue chain is Neuronal regeneration-related protein (68 aa).

This Gallus gallus (Chicken) protein is Neuronal regeneration-related protein (NREP).